Consider the following 324-residue polypeptide: dITP/XTP pyrophosphatase (324 aa).

Residues 1–126 are unknown; the sequence is MTKSIFEYKD…SDNKSDFGDV (126 aa). Residues 127–324 form an NTP pyrophosphatase region; that stretch reads LLIATRNEGK…EVFPAWQNKQ (198 aa). 131 to 136 serves as a coordination point for substrate; that stretch reads TRNEGK. Aspartate 193 acts as the Proton acceptor in catalysis. Aspartate 193 lines the Mg(2+) pocket. Substrate is bound by residues serine 194, 277 to 280, lysine 300, and 305 to 306; these read FGYD and HR.

The protein belongs to the HAM1 NTPase family. As to quaternary structure, homodimer. Requires Mg(2+) as cofactor.

The enzyme catalyses XTP + H2O = XMP + diphosphate + H(+). The catalysed reaction is dITP + H2O = dIMP + diphosphate + H(+). It carries out the reaction ITP + H2O = IMP + diphosphate + H(+). Pyrophosphatase that catalyzes the hydrolysis of nucleoside triphosphates to their monophosphate derivatives, with a high preference for the non-canonical purine nucleotides XTP (xanthosine triphosphate), dITP (deoxyinosine triphosphate) and ITP. Seems to function as a house-cleaning enzyme that removes non-canonical purine nucleotides from the nucleotide pool, thus preventing their incorporation into DNA/RNA and avoiding chromosomal lesions. This is dITP/XTP pyrophosphatase from Streptococcus thermophilus (strain CNRZ 1066).